A 128-amino-acid polypeptide reads, in one-letter code: Large ribosomal subunit protein mL51 (128 aa).

A mitochondrion-targeting transit peptide spans 1 to 31; the sequence is MAGNLLSGAGRRLWDWVPLACRSFSLGVPRL.

Belongs to the mitochondrion-specific ribosomal protein mL51 family. Component of the mitochondrial large ribosomal subunit (mt-LSU). Mature mammalian 55S mitochondrial ribosomes consist of a small (28S) and a large (39S) subunit. The 28S small subunit contains a 12S ribosomal RNA (12S mt-rRNA) and 30 different proteins. The 39S large subunit contains a 16S rRNA (16S mt-rRNA), a copy of mitochondrial valine transfer RNA (mt-tRNA(Val)), which plays an integral structural role, and 52 different proteins. Interacts with OXA1L.

The protein localises to the mitochondrion. The sequence is that of Large ribosomal subunit protein mL51 (MRPL51) from Homo sapiens (Human).